Consider the following 258-residue polypeptide: MASTKERENFVYVAKLAEQAERYEEMVEAMKNVANLNVELTVEERNLLSVGYKNVVGARRASWRILSSIEQKEEAKGNDVSVKRIKEYRLKVESELSNICSDIMTVIDEYLIPSSSSGEPSVFFYKMKGDYYRYLAEFKSGDERKEAADHSMKAYQLASTTAEAELASTHPIRLGLALNFSVFYYEILNSPERACHLAKQAFDEAISELDTLSEESYKDSTLIMQLLRDNLTLWTSDIPEDGEEQKVDSARADGGDDA.

Residues 237–258 are disordered; the sequence is DIPEDGEEQKVDSARADGGDDA. Over residues 244-258 the composition is skewed to basic and acidic residues; sequence EQKVDSARADGGDDA.

It belongs to the 14-3-3 family.

The protein is 14-3-3-like protein C (GF14C) of Glycine max (Soybean).